The primary structure comprises 462 residues: tRNA modification GTPase MnmE (462 aa).

(6S)-5-formyl-5,6,7,8-tetrahydrofolate contacts are provided by R27, E89, and R128. The TrmE-type G domain maps to 223–383; the sequence is GLKIAIVGRP…LEAAILAAVG (161 aa). A K(+)-binding site is contributed by N233. GTP contacts are provided by residues 233–238, 252–258, and 277–280; these read NVGKSS, TDLPGTT, and DTAG. S237 is a Mg(2+) binding site. T252, L254, and T257 together coordinate K(+). Residue T258 coordinates Mg(2+). (6S)-5-formyl-5,6,7,8-tetrahydrofolate is bound at residue K462.

It belongs to the TRAFAC class TrmE-Era-EngA-EngB-Septin-like GTPase superfamily. TrmE GTPase family. Homodimer. Heterotetramer of two MnmE and two MnmG subunits. The cofactor is K(+).

The protein localises to the cytoplasm. In terms of biological role, exhibits a very high intrinsic GTPase hydrolysis rate. Involved in the addition of a carboxymethylaminomethyl (cmnm) group at the wobble position (U34) of certain tRNAs, forming tRNA-cmnm(5)s(2)U34. The protein is tRNA modification GTPase MnmE of Synechococcus elongatus (strain ATCC 33912 / PCC 7942 / FACHB-805) (Anacystis nidulans R2).